The sequence spans 393 residues: S-adenosylmethionine synthase 2 (393 aa).

Glutamate 9 contributes to the Mg(2+) binding site. Histidine 15 provides a ligand contact to ATP. Glutamate 43 serves as a coordination point for K(+). Residues glutamate 56 and glutamine 99 each contribute to the L-methionine site. ATP is bound by residues 167 to 169, 235 to 238, aspartate 246, 252 to 253, alanine 269, lysine 273, and lysine 277; these read DGK, SGRF, and RK. Aspartate 246 is an L-methionine binding site. Residue lysine 277 participates in L-methionine binding.

Belongs to the AdoMet synthase family. As to quaternary structure, homotetramer. It depends on Mn(2+) as a cofactor. The cofactor is Mg(2+). Requires Co(2+) as cofactor. K(+) is required as a cofactor. Roots and shoots.

It is found in the cytoplasm. It catalyses the reaction L-methionine + ATP + H2O = S-adenosyl-L-methionine + phosphate + diphosphate. It functions in the pathway amino-acid biosynthesis; S-adenosyl-L-methionine biosynthesis; S-adenosyl-L-methionine from L-methionine: step 1/1. Catalyzes the formation of S-adenosylmethionine from methionine and ATP. The reaction comprises two steps that are both catalyzed by the same enzyme: formation of S-adenosylmethionine (AdoMet) and triphosphate, and subsequent hydrolysis of the triphosphate. In Pinus contorta (Shore pine), this protein is S-adenosylmethionine synthase 2 (SAMS2).